We begin with the raw amino-acid sequence, 311 residues long: Cytosolic Fe-S cluster assembly factor Nubp1 homolog (311 aa).

Positions methionine 1 to serine 21 are disordered. The [4Fe-4S] cluster site is built by cysteine 9, cysteine 23, cysteine 26, and cysteine 32. Glycine 63 to serine 70 lines the ATP pocket. Cysteine 240 and cysteine 243 together coordinate [4Fe-4S] cluster.

This sequence belongs to the Mrp/NBP35 ATP-binding proteins family. NUBP1/NBP35 subfamily. As to quaternary structure, heterotetramer of 2 Nubp1 and 2 Nubp2 chains. [4Fe-4S] cluster is required as a cofactor.

The protein localises to the cytoplasm. Component of the cytosolic iron-sulfur (Fe/S) protein assembly (CIA) machinery. Required for maturation of extramitochondrial Fe-S proteins. The Nubp1-Nubp2 heterotetramer forms a Fe-S scaffold complex, mediating the de novo assembly of an Fe-S cluster and its transfer to target apoproteins. In Drosophila sechellia (Fruit fly), this protein is Cytosolic Fe-S cluster assembly factor Nubp1 homolog.